Reading from the N-terminus, the 641-residue chain is Glycerol metabolism operon regulatory protein (641 aa).

The sensor domain stretch occupies residues 1 to 318; the sequence is MTTHTQDIGK…MRQLMTSQLG (318 aa). Residues 52–189 form the GAF domain; that stretch reads ALLTIAQAAL…AIAREVGNSL (138 aa). Positions 203 to 265 constitute a PAS domain; sequence NQMYGLLESM…MLLRRAIKHA (63 aa). The region spanning 327 to 552 is the Sigma-54 factor interaction domain; the sequence is MSTDDPETRR…LNSIIENIAI (226 aa). Residues 355–362 and 415–424 each bind ATP; these read GEEGVGKE and ANGGTLFLEK.

In terms of biological role, transcriptional activator of the glycerol utilization dha operon. The polypeptide is Glycerol metabolism operon regulatory protein (Citrobacter freundii).